The following is a 526-amino-acid chain: Cell adhesion molecule CEACAM1 (526 aa).

Residues 1 to 34 (MGHLSAPLHRVRVPWQGLLLTASLLTFWNPPTTA) form the signal peptide. Gln35 bears the Pyrrolidone carboxylic acid mark. Residues 35–142 (QLTTESMPFN…EATGQFHVYP (108 aa)) form the Ig-like V-type domain. Residues 35–428 (QLTTESMPFN…LPQENGLSPG (394 aa)) lie on the Extracellular side of the membrane. Residues 39–142 (ESMPFNVAEG…EATGQFHVYP (104 aa)) form a required for homophilic binding region. N-linked (GlcNAc...) asparagine glycosylation is found at Asn104, Asn111, Asn115, Asn152, Asn182, Asn197, Asn208, Asn224, Asn232, Asn254, Asn274, Asn288, Asn292, Asn302, Asn309, Asn345, Asn351, Asn363, Asn378, and Asn405. Ig-like C2-type domains lie at 145–232 (PKPS…VTLN), 237–317 (PDTP…KTII), and 323–413 (PVVA…IMLN). Cysteines 167 and 215 form a disulfide. Cys259 and Cys299 are joined by a disulfide. A disulfide bond links Cys348 and Cys396. The chain crosses the membrane as a helical span at residues 429–452 (AIAGIVIGVVALVALIAVALACFL). The interval 450–462 (CFLHFGKTGRASD) is interaction with calmodulin. The interaction with FLNA stretch occupies residues 452–526 (LHFGKTGRAS…EIIYSEVKKQ (75 aa)). Residues 453 to 526 (HFGKTGRASD…EIIYSEVKKQ (74 aa)) are Cytoplasmic-facing. A compositionally biased stretch (basic and acidic residues) spans 461–482 (SDQRDLTEHKPSVSNHTQDHSN). A disordered region spans residues 461 to 513 (SDQRDLTEHKPSVSNHTQDHSNDPPNKMNEVTYSTLNFEAQQPTQPTSASPSL). The segment covering 489–513 (NEVTYSTLNFEAQQPTQPTSASPSL) has biased composition (polar residues). The interval 489–526 (NEVTYSTLNFEAQQPTQPTSASPSLTATEIIYSEVKKQ) is required for interaction with PTPN11 and PTPN6 and for control of phosphorylation level. The residue at position 493 (Tyr493) is a Phosphotyrosine; by SRC, LCK, INSR and EGFR. At Ser508 the chain carries Phosphoserine. At Tyr520 the chain carries Phosphotyrosine; by INSR, SRC and LCK. The interval 520–523 (YSEV) is essential for interaction with PTPN11 and PTPN6.

The protein belongs to the immunoglobulin superfamily. CEA family. Monomer. Oligomer. Heterodimer. Homodimer. Cis-dimer/oligomer (via Ig-like C2-type and/or via cytoplasmic domains); induced by trans-homophilic cell adhesion through an allosteric mechanism transmitted by the Ig-like V-type domain, and is regulated by intracellular calcium and calmodulin. Interacts (via cytoplasmic domain) with calmodulin in a calcium dependent manner; reduces homophilic cell adhesion through dissociation of dimer. Isoform 1 interacts (via cytoplasmic domain) with PTPN11 (preferentially) and PTPN6; cis-homodimer form is preferred; this interaction is decreased by formation of Isoform 1 /Isoform 8 cis-heterodimers and is dependent on the monomer/dimer equilibrium; this interaction is phosphorylation-dependent. Isoform 1 interacts with LYN. Isoform 1 interacts (via cytoplasmic domain) with SRC (via SH2 domain); this interaction is regulated by trans-homophilic cell adhesion. Isoform 1 interacts (via cytoplasmic domain) with LCK; mediates phosphorylation at Tyr-493 and Tyr-520 resulting in PTPN6 association. Isoform 1 interacts with PTPN6; this interaction is phosphorylation-dependent and causes a profound decrease in TCR stimulation-induced CD247 and ZAP70 phosphorylation. Isoform 1 interacts with TCR/CD3 complex through TCR beta chain and CD3E; colocalizes at the cell surface and upon stimulation of the TCR/CD3 complex recruits PTPN6 in the TCR/CD3 complex, resulting in dephosphorylation of CD247 and ZAP70. Isoform 1 interacts (via cytoplasmic domain) with SHC1 (via SH2 domain); SHC1 mediates interaction with INSR or EGFR in a Ser-508 phosphorylation-dependent manner. Isoform 1 interacts with EGFR; the interaction is indirect. Isoform 1 interacts with CSF3R; down-regulates the CSF3R-STAT3 pathway through recruitment of PTPN6 that dephosphorylates CSF3R. Isoform 1 (phosphorylated form) interacts with TLR4 and SYK; recruits PTPN6 that dephosphorylates SYK, reducing the production of reactive oxygen species (ROS) and lysosome disruption, leading to a reduction of the inflammasome activity. Isoform 1 interacts with FLNA; inhibits cell migration and cell scattering by interfering with the interaction of FLNA with RALA. Isoform 1 interacts (via cytoplasmic domain) with PXN; the interaction is phosphotyrosyl-dependent. Isoform 1 interacts with KLRK1; recruits PTPN6 that dephosphorylates VAV1. Isoform 1 interacts with CEACAM8. Isoform 1 interacts with FASN; this interaction is insulin and phosphorylation-dependent; reduces fatty-acid synthase activity. Interacts (via Ig-like V-type) with HAVCR2 (via Ig-like V-type); facilitates the maturation and cell surface expression of HAVCR2 thereby regulating T cell tolerance induction. Isoform 8 interacts (via the cytoplasmic domain) with ANXA2; this interaction is regulated by phosphorylation and appears in the AIIt complex. Interacts (via Lewis X moieties) with CD209 (via C-type lectin domain); this interaction is regulated by the glycosylation pattern of CEACAM1 on cell types and regulates contact between dendritic cells and neutrophils. In terms of processing, phosphorylated on serine and tyrosine. Isoform 1 is phosphorylated on tyrosine by Src family kinases like SRC and LCK and by receptor like CSF3R, EGFR and INSR upon stimulation. Phosphorylated at Ser-508; mediates activity. Phosphorylated at Tyr-493; regulates activity. Phosphorylated at Tyr-493 by EGFR and INSR upon stimulation; this phosphorylation is Ser-508-phosphorylation-dependent; mediates cellular internalization; increases interaction with downstream proteins like SHC1 and FASN. Phosphorylated at Tyr-493 and Tyr-520 by LCK; mediates PTPN6 association and is regulated by homophilic ligation of CEACAM1 in the absence of T cell activation. Phosphorylated at Tyr-520; mediates interaction with PTPN11. Post-translationally, phosphorylated on serine and threonine. Expressed in columnar epithelial cells of the colon (at protein level). The predominant forms expressed by T cells are those containing a long cytoplasmic domain. Expressed in granulocytes and lymphocytes. Leukocytes only express isoforms 6 and isoform 1.

The protein resides in the cell membrane. Its subcellular location is the lateral cell membrane. It is found in the apical cell membrane. The protein localises to the basal cell membrane. It localises to the cell junction. The protein resides in the adherens junction. Its subcellular location is the secreted. It is found in the cytoplasmic vesicle. The protein localises to the secretory vesicle membrane. It localises to the cell projection. The protein resides in the microvillus membrane. Functionally, cell adhesion protein that mediates homophilic cell adhesion in a calcium-independent manner. Plays a role as coinhibitory receptor in immune response, insulin action and also functions as an activator during angiogenesis. Its coinhibitory receptor function is phosphorylation- and PTPN6 -dependent, which in turn, suppress signal transduction of associated receptors by dephosphorylation of their downstream effectors. Plays a role in immune response, of T cells, natural killer (NK) and neutrophils. Upon TCR/CD3 complex stimulation, inhibits TCR-mediated cytotoxicity by blocking granule exocytosis by mediating homophilic binding to adjacent cells, allowing interaction with and phosphorylation by LCK and interaction with the TCR/CD3 complex which recruits PTPN6 resulting in dephosphorylation of CD247 and ZAP70. Also inhibits T cell proliferation and cytokine production through inhibition of JNK cascade and plays a crucial role in regulating autoimmunity and anti-tumor immunity by inhibiting T cell through its interaction with HAVCR2. Upon natural killer (NK) cells activation, inhibit KLRK1-mediated cytolysis of CEACAM1-bearing tumor cells by trans-homophilic interactions with CEACAM1 on the target cell and lead to cis-interaction between CEACAM1 and KLRK1, allowing PTPN6 recruitment and then VAV1 dephosphorylation. Upon neutrophils activation negatively regulates IL1B production by recruiting PTPN6 to a SYK-TLR4-CEACAM1 complex, that dephosphorylates SYK, reducing the production of reactive oxygen species (ROS) and lysosome disruption, which in turn, reduces the activity of the inflammasome. Down-regulates neutrophil production by acting as a coinhibitory receptor for CSF3R by down-regulating the CSF3R-STAT3 pathway through recruitment of PTPN6 that dephosphorylates CSF3R. Also regulates insulin action by promoting INS clearance and regulating lipogenesis in liver through regulating insulin signaling. Upon INS stimulation, undergoes phosphorylation by INSR leading to INS clearance by increasing receptor-mediated insulin endocytosis. This inernalization promotes interaction with FASN leading to receptor-mediated insulin degradation and to reduction of FASN activity leading to negative regulation of fatty acid synthesis. INSR-mediated phosphorylation also provokes a down-regulation of cell proliferation through SHC1 interaction resulting in decrease coupling of SHC1 to the MAPK3/ERK1-MAPK1/ERK2 and phosphatidylinositol 3-kinase pathways. Functions as activator in angiogenesis by promoting blood vessel remodeling through endothelial cell differentiation and migration and in arteriogenesis by increasing the number of collateral arteries and collateral vessel calibers after ischemia. Also regulates vascular permeability through the VEGFR2 signaling pathway resulting in control of nitric oxide production. Down-regulates cell growth in response to EGF through its interaction with SHC1 that mediates interaction with EGFR resulting in decrease coupling of SHC1 to the MAPK3/ERK1-MAPK1/ERK2 pathway. Negatively regulates platelet aggregation by decreasing platelet adhesion on type I collagen through the GPVI-FcRgamma complex. Inhibits cell migration and cell scattering through interaction with FLNA; interferes with the interaction of FLNA with RALA. Mediates bile acid transport activity in a phosphorylation dependent manner. Negatively regulates osteoclastogenesis. In terms of biological role, cell adhesion protein that mediates homophilic cell adhesion in a calcium-independent manner. Promotes populations of T cells regulating IgA production and secretion associated with control of the commensal microbiota and resistance to enteropathogens. This Homo sapiens (Human) protein is Cell adhesion molecule CEACAM1.